The chain runs to 488 residues: Acetyl-coenzyme A carboxylase carboxyl transferase subunit beta, chloroplastic (488 aa).

Residues 189 to 211 (ISGSDSGSSNIRTDGNGSDIRGR) form a disordered region. The CoA carboxyltransferase N-terminal domain occupies 224 to 488 (LWVQCENCYG…LHGFFPLTQN (265 aa)). Zn(2+)-binding residues include Cys228, Cys231, Cys247, and Cys250. A C4-type zinc finger spans residues 228–250 (CENCYGLNYKKFFKSKMNICEQC).

This sequence belongs to the AccD/PCCB family. As to quaternary structure, acetyl-CoA carboxylase is a heterohexamer composed of biotin carboxyl carrier protein, biotin carboxylase and 2 subunits each of ACCase subunit alpha and ACCase plastid-coded subunit beta (accD). Zn(2+) is required as a cofactor.

Its subcellular location is the plastid. It is found in the chloroplast stroma. The catalysed reaction is N(6)-carboxybiotinyl-L-lysyl-[protein] + acetyl-CoA = N(6)-biotinyl-L-lysyl-[protein] + malonyl-CoA. It participates in lipid metabolism; malonyl-CoA biosynthesis; malonyl-CoA from acetyl-CoA: step 1/1. Functionally, component of the acetyl coenzyme A carboxylase (ACC) complex. Biotin carboxylase (BC) catalyzes the carboxylation of biotin on its carrier protein (BCCP) and then the CO(2) group is transferred by the transcarboxylase to acetyl-CoA to form malonyl-CoA. The sequence is that of Acetyl-coenzyme A carboxylase carboxyl transferase subunit beta, chloroplastic from Liriodendron tulipifera (Tuliptree).